Reading from the N-terminus, the 383-residue chain is 8-amino-7-oxononanoate synthase (383 aa).

A substrate-binding site is contributed by Arg23. Residue 110–111 (GF) coordinates pyridoxal 5'-phosphate. Residue His135 coordinates substrate. Pyridoxal 5'-phosphate is bound by residues Ser181, His209, and Thr235. Residue Lys238 is modified to N6-(pyridoxal phosphate)lysine. Thr351 provides a ligand contact to substrate.

It belongs to the class-II pyridoxal-phosphate-dependent aminotransferase family. BioF subfamily. Homodimer. Pyridoxal 5'-phosphate is required as a cofactor.

The enzyme catalyses 6-carboxyhexanoyl-[ACP] + L-alanine + H(+) = (8S)-8-amino-7-oxononanoate + holo-[ACP] + CO2. It functions in the pathway cofactor biosynthesis; biotin biosynthesis. In terms of biological role, catalyzes the decarboxylative condensation of pimeloyl-[acyl-carrier protein] and L-alanine to produce 8-amino-7-oxononanoate (AON), [acyl-carrier protein], and carbon dioxide. The protein is 8-amino-7-oxononanoate synthase of Aliivibrio fischeri (strain MJ11) (Vibrio fischeri).